The sequence spans 129 residues: CD59B glycoprotein (129 aa).

The signal sequence occupies residues 1–23 (MRAQRGLILLLLLLAVFCSTAVS). Residues 24–107 (LKCYNCLDPV…GLEEPNNAET (84 aa)) enclose the UPAR/Ly6 domain. Intrachain disulfides connect Cys-26-Cys-49, Cys-29-Cys-36, Cys-42-Cys-62, Cys-68-Cys-86, and Cys-87-Cys-92. Asn-39 carries N-linked (GlcNAc...) asparagine glycosylation. Asn-104 is lipidated: GPI-anchor amidated asparagine. A propeptide spans 105 to 129 (AETSSLRKTALLGTSVLVAILKFCF) (removed in mature form).

In terms of assembly, interacts with T-cell surface antigen CD2. Post-translationally, N- and O-glycosylated. As to expression, widely expressed in the kidneys, brain, lungs, spleen and testis Testis-specific.

The protein resides in the cell membrane. It localises to the secreted. Functionally, potent inhibitor of the complement membrane attack complex (MAC) action, which protects self-cells from damage during complement activation. Acts by binding to the beta-haipins of C8 (C8A and C8B) components of the assembling MAC, forming an intermolecular beta-sheet that prevents incorporation of the multiple copies of C9 required for complete formation of the osmolytic pore. The chain is CD59B glycoprotein from Mus musculus (Mouse).